The chain runs to 171 residues: MTKQNAFTREDLLRCSRGELFGPGNAQLPAPNMLMVDRITHISEEGGKYGKGELVAELDITPDLWFFACHFEGDPVMPGCLGLDAMWQLVGFFLGWQGLPGRGRALGSGEVKFFGQVLPTAKKVTYNIQIKRVLKGKLNLAIADGSVSVDGREIYTAEGLRVGVFTSTDNF.

The active site involves histidine 70.

Belongs to the thioester dehydratase family. FabA subfamily. As to quaternary structure, homodimer.

It is found in the cytoplasm. It carries out the reaction a (3R)-hydroxyacyl-[ACP] = a (2E)-enoyl-[ACP] + H2O. The catalysed reaction is (3R)-hydroxydecanoyl-[ACP] = (2E)-decenoyl-[ACP] + H2O. The enzyme catalyses (2E)-decenoyl-[ACP] = (3Z)-decenoyl-[ACP]. Its pathway is lipid metabolism; fatty acid biosynthesis. Functionally, necessary for the introduction of cis unsaturation into fatty acids. Catalyzes the dehydration of (3R)-3-hydroxydecanoyl-ACP to E-(2)-decenoyl-ACP and then its isomerization to Z-(3)-decenoyl-ACP. Can catalyze the dehydratase reaction for beta-hydroxyacyl-ACPs with saturated chain lengths up to 16:0, being most active on intermediate chain length. The sequence is that of 3-hydroxydecanoyl-[acyl-carrier-protein] dehydratase from Pseudomonas fluorescens (strain SBW25).